The chain runs to 73 residues: Beta-defensin 108B (73 aa).

The signal sequence occupies residues 1–22 (MRIAVLLFAIFFFMSQVLPARG). Cystine bridges form between C28-C55, C35-C49, and C39-C56.

The protein belongs to the beta-defensin family. As to expression, specifically expressed in testis. Low expression is detected also in liver.

The protein localises to the secreted. In terms of biological role, has antibacterial activity. In Homo sapiens (Human), this protein is Beta-defensin 108B (DEFB108B).